A 364-amino-acid polypeptide reads, in one-letter code: Oxidized polyvinyl alcohol hydrolase (364 aa).

Positions 1–34 (MFKPVVKSRSSRSFCYLAGCLAMVAATLSSTAQA) are cleaved as a signal peptide. Residues serine 190 and serine 293 each act as charge relay system in the active site.

It belongs to the peptidase S9A family. As to quaternary structure, monomer.

The protein localises to the periplasm. It catalyses the reaction nonane-4,6-dione + H2O = pentan-2-one + butanoate + H(+). In terms of biological role, catalyzes the hydrolysis of 4,6-nonanedione, a beta-diketone compound. Also mediates hydrolysis of oxidized polyvinyl alcohol (PVA) in the second step in the degradation of polyvinyl alcohol. Not active toward the monoketone structure. This chain is Oxidized polyvinyl alcohol hydrolase (oph), found in Sphingopyxis sp. (strain 113P3).